The following is a 348-amino-acid chain: tRNA pseudouridine synthase D (348 aa).

The Nucleophile role is filled by D78. The 155-residue stretch at 150 to 304 folds into the TRUD domain; the sequence is GLPNFFGPQR…AEGTRRAARL (155 aa).

The protein belongs to the pseudouridine synthase TruD family.

The enzyme catalyses uridine(13) in tRNA = pseudouridine(13) in tRNA. Functionally, responsible for synthesis of pseudouridine from uracil-13 in transfer RNAs. The chain is tRNA pseudouridine synthase D from Anaeromyxobacter dehalogenans (strain 2CP-1 / ATCC BAA-258).